A 759-amino-acid polypeptide reads, in one-letter code: MVYDNIKREIIGMLKRMPNKQADWDNDLLPTLKAMFNPKSVSNAKSQLISEGVISQEIVDGKKIITLIKDPYELQAPNVFDEEMFLAYYTDKLKEYFKHKLSTEGPEWDIFDVKEFIMHFPESGDLNDKLIEHPYEVRKSITNVYIEAYEELFNETPNVEFIHIRNPIDCRISLSELSSAHKGKLVEFRAMILQATKLKLRYAKGFYYCPKCGATKTLDLGFWDKPKEVGKSLTCPADGCDCKGLIFDEDLSGKVDFQEIKVQTPLQESIYANKHSTTVFYEFNKPKKAVYSGYVKIVGVPIVKENKNGSVGELYIHAFYIEKDDEDIEEIAKNLNEKDLELINRIAKDKNVIQKLSDYAFREVTGYDMIKRAVLLQLVSSGTNIDMRTSIHILMISDPGVGKSTLMESLIQKFPFVKKVYAVTSSGPGLVGSVVREKAEFGDSWVLKAGVLTEADGGVVCIDEFSRNKEVYDYLLGVMEQQKIEINKAGVIDAVLPARVAILAACNPRFGRFNPDLTVWEQINLPKELLDRFDLIFVIKDKIDKKKDEDIADFSIDNYNSKVRERKGKSSGKKFVINGVELNDELLLKYVLYARQIEPEISDEARKIIKEYYVSVRKMSEAKGTFGISARQLGSIIRLAVAHAKLRLSEVVKAVDAEEAIRLVDTCLKQIAYDPESGSIDIDKIAGTPKSKRDKVEKVLNIIKEISNSRDDGLAPEEEIYERAERAGLSEKEVEDAINYLKRVGDIYSPKSGYWQLMS.

One can recognise an MCM domain in the interval 352 to 556 (VIQKLSDYAF…KDEDIADFSI (205 aa)). Position 397-404 (397-404 (SDPGVGKS)) interacts with ATP.

The protein belongs to the MCM family.

This is an uncharacterized protein from Methanocaldococcus jannaschii (strain ATCC 43067 / DSM 2661 / JAL-1 / JCM 10045 / NBRC 100440) (Methanococcus jannaschii).